Consider the following 519-residue polypeptide: ATP synthase subunit alpha (519 aa).

174-181 (GDRQTGKT) lines the ATP pocket.

Belongs to the ATPase alpha/beta chains family. F-type ATPases have 2 components, CF(1) - the catalytic core - and CF(0) - the membrane proton channel. CF(1) has five subunits: alpha(3), beta(3), gamma(1), delta(1), epsilon(1). CF(0) has three main subunits: a(1), b(2) and c(9-12). The alpha and beta chains form an alternating ring which encloses part of the gamma chain. CF(1) is attached to CF(0) by a central stalk formed by the gamma and epsilon chains, while a peripheral stalk is formed by the delta and b chains.

The protein localises to the cell inner membrane. It carries out the reaction ATP + H2O + 4 H(+)(in) = ADP + phosphate + 5 H(+)(out). Produces ATP from ADP in the presence of a proton gradient across the membrane. The alpha chain is a regulatory subunit. The polypeptide is ATP synthase subunit alpha (Acidovorax ebreus (strain TPSY) (Diaphorobacter sp. (strain TPSY))).